The chain runs to 373 residues: Dual-specificity RNA methyltransferase RlmN (373 aa).

Catalysis depends on E94, which acts as the Proton acceptor. The 240-residue stretch at 100-339 (EDDRATLCVS…VIVRKTRGDD (240 aa)) folds into the Radical SAM core domain. A disulfide bridge connects residues C107 and C344. [4Fe-4S] cluster is bound by residues C114, C118, and C121. Residues 168–169 (GE), S200, 222–224 (SIH), and N301 contribute to the S-adenosyl-L-methionine site. C344 acts as the S-methylcysteine intermediate in catalysis.

This sequence belongs to the radical SAM superfamily. RlmN family. It depends on [4Fe-4S] cluster as a cofactor.

The protein localises to the cytoplasm. It carries out the reaction adenosine(2503) in 23S rRNA + 2 reduced [2Fe-2S]-[ferredoxin] + 2 S-adenosyl-L-methionine = 2-methyladenosine(2503) in 23S rRNA + 5'-deoxyadenosine + L-methionine + 2 oxidized [2Fe-2S]-[ferredoxin] + S-adenosyl-L-homocysteine. It catalyses the reaction adenosine(37) in tRNA + 2 reduced [2Fe-2S]-[ferredoxin] + 2 S-adenosyl-L-methionine = 2-methyladenosine(37) in tRNA + 5'-deoxyadenosine + L-methionine + 2 oxidized [2Fe-2S]-[ferredoxin] + S-adenosyl-L-homocysteine. In terms of biological role, specifically methylates position 2 of adenine 2503 in 23S rRNA and position 2 of adenine 37 in tRNAs. m2A2503 modification seems to play a crucial role in the proofreading step occurring at the peptidyl transferase center and thus would serve to optimize ribosomal fidelity. This is Dual-specificity RNA methyltransferase RlmN from Shewanella sp. (strain W3-18-1).